A 359-amino-acid polypeptide reads, in one-letter code: Probable mannitol dehydrogenase (359 aa).

7 residues coordinate Zn(2+): Cys50, His72, Cys103, Cys106, Cys109, Cys117, and Cys165.

It belongs to the zinc-containing alcohol dehydrogenase family. It depends on Zn(2+) as a cofactor.

The catalysed reaction is D-mannitol + NAD(+) = D-mannose + NADH + H(+). Oxidizes mannitol to mannose. Provides the initial step by which translocated mannitol is committed to central metabolism and, by regulating mannitol pool size, is important in regulating salt tolerance at the cellular level. This chain is Probable mannitol dehydrogenase (CAD1), found in Medicago sativa (Alfalfa).